Here is an 818-residue protein sequence, read N- to C-terminus: IQ and AAA domain-containing protein 1-like (818 aa).

Residues 206 to 235 enclose the IQ domain; that stretch reads QGQAAVTIQKVWKGYLQRKRTQQDRRMEME. 2 disordered regions span residues 344 to 377 and 458 to 482; these read QMQENRKKEQEKSKEKGKDEKEKKKGKEEKAKKG and EERPLRAPKKTPGKKTGKKKEKDLT. Basic residues predominate over residues 463-476; it reads RAPKKTPGKKTGKK. 567-574 is a binding site for ATP; that stretch reads GPSGMGKK. Positions 795–818 are disordered; it reads SMKHRMDQLEAEEAKLDKEKKKRK. Basic and acidic residues predominate over residues 798-818; that stretch reads HRMDQLEAEEAKLDKEKKKRK.

It belongs to the AAA ATPase family.

The chain is IQ and AAA domain-containing protein 1-like (IQCA1L) from Homo sapiens (Human).